The following is a 425-amino-acid chain: MAKTIQAIRGMNDCSPTESLLWQWVEEKVRSVLQTYGYSEVRMPIVESTPLFARAIGEVTDVVSKEMYTFWDNDEQLTLRPEGTAGCVRAAIEHGWIYNNEQRLWYMGPMFRHERPQKGRYRQFHQAGVEVFGIANPEIDAELILLTARLWKQLGIFDHVTLQLNSIGSLESRQNYRSALVEFLQQHTDLLSEEEKERLVKNPLRILDTKNQVLQEVLNDAPKLLDYLDQESREHFSQLCDLLDAVGIQYEINPKLVRGLDYYNKTVFEWVTSALGAQGTVCGGGRYDGLVEQLGGHATCSVGFAMGLERLVLLVQEVNKQIVLPSAVDIYVVYFGEKTTLPAFQLAEKIRTELPHLRTMTHCGGGNFKKQFKRADKVGAKFALVIGETEVKTQQVVVKDLLGGAEQLSLALTDVVIYLKQAITQ.

The protein belongs to the class-II aminoacyl-tRNA synthetase family. Homodimer.

Its subcellular location is the cytoplasm. The catalysed reaction is tRNA(His) + L-histidine + ATP = L-histidyl-tRNA(His) + AMP + diphosphate + H(+). This Histophilus somni (strain 129Pt) (Haemophilus somnus) protein is Histidine--tRNA ligase.